The chain runs to 201 residues: Mediator of RNA polymerase II transcription subunit 19 (201 aa).

The interval 166 to 201 (GTGKSNAKKRKNRSNGSSMATPNSEMQDDVKRRRLE) is disordered.

The protein belongs to the Mediator complex subunit 19 family. Component of the Mediator complex.

It is found in the nucleus. Component of the Mediator complex, a coactivator involved in the regulated transcription of nearly all RNA polymerase II-dependent genes. Mediator functions as a bridge to convey information from gene-specific regulatory proteins to the basal RNA polymerase II transcription machinery. Mediator is recruited to promoters by direct interactions with regulatory proteins and serves as a scaffold for the assembly of a functional preinitiation complex with RNA polymerase II and the general transcription factors. In Candida glabrata (strain ATCC 2001 / BCRC 20586 / JCM 3761 / NBRC 0622 / NRRL Y-65 / CBS 138) (Yeast), this protein is Mediator of RNA polymerase II transcription subunit 19 (ROX3).